The following is a 534-amino-acid chain: MAQLGKLLKEQKYDRQLRLWGDHGQEALESAHVCLINATATGTEILKNLVLPGIGSFTIIDGNQVSGEDAGNNFFLQRSSIGKNRAEAAMEFLQELNSDVSGSFVEESPENLLDNDPSFFCRFTVVVATQLPESTSLRLADVLWNSQIPLLICRTYGLVGYMRIIIKEHPVIESHPDNALEDLRLDKPFPELREHFQSYDLDHMEKKDHSHTPWIVIIAKYLAQWYSETNGRIPKTYKEKEDFRDLIRQGILKNENGAPEDEENFEEAIKNVNTALNTTQIPSSIEDIFNDDRCINITKQTPSFWILARALKEFVAKEGQGNLPVRGTIPDMIADSGKYIKLQNVYREKAKKDAAAVGNHVAKLLQSIGQAPESISEKELKLLCSNSAFLRVVRCRSLAEEYGLDTINKDEIISSMDNPDNEIVLYLMLRAVDRFHKQQGRYPGVSNYQVEEDIGKLKSCLTGFLQEYGLSVMVKDDYVHEFCRYGAAEPHTIAAFLGGAAAQEVIKIITKQFVIFNNTYIYSGMSQTSATFQL.

Ala2 carries the post-translational modification N-acetylalanine. Residues Lys6 and Lys341 each carry the N6-acetyllysine modification. An interaction with UBA3 region spans residues 331 to 344; the sequence is DMIADSGKYIKLQN.

It belongs to the ubiquitin-activating E1 family. ULA1 subfamily. As to quaternary structure, heterodimer of UBA3 and NAE1. The complex binds NEDD8 and UBE2M. Binds APP and TP53BP2. Post-translationally, ubiquitinated by TRIP12, leading to its degradation by the proteasome. Ubiquitous in fetal tissues. Expressed throughout the adult brain.

The protein localises to the cell membrane. Its pathway is protein modification; protein neddylation. With respect to regulation, binding of TP53BP2 to the regulatory subunit NAE1 decreases neddylation activity. In terms of biological role, regulatory subunit of the dimeric UBA3-NAE1 E1 enzyme. E1 activates NEDD8 by first adenylating its C-terminal glycine residue with ATP, thereafter linking this residue to the side chain of the catalytic cysteine, yielding a NEDD8-UBA3 thioester and free AMP. E1 finally transfers NEDD8 to the catalytic cysteine of UBE2M. Necessary for cell cycle progression through the S-M checkpoint. Overexpression of NAE1 causes apoptosis through deregulation of NEDD8 conjugation. The covalent attachment of NEDD8 to target proteins is known as 'neddylation' and the process is involved in the regulation of cell growth, viability and development. In Homo sapiens (Human), this protein is NEDD8-activating enzyme E1 regulatory subunit (NAE1).